A 451-amino-acid polypeptide reads, in one-letter code: Cobalamin reductase PduS (451 aa).

2 consecutive 4Fe-4S ferredoxin-type domains span residues 255 to 284 (TVLS…HELS) and 300 to 330 (PQLL…MRIN). 8 residues coordinate [4Fe-4S] cluster: Cys264, Cys267, Cys270, Cys274, Cys309, Cys312, Cys315, and Cys320.

It belongs to the PduS cobalamin reductase family. Monomer, forms a complex with PduO. Interacts with PduT, probably via the N-terminus of PduS. Requires [4Fe-4S] cluster as cofactor. FMN is required as a cofactor.

It is found in the bacterial microcompartment. It participates in polyol metabolism; 1,2-propanediol degradation. A bifunctional cobalamin reductase that converts cob(III)alamin to cob(II)alamin and then to cob(I)alamin in the bacterial microcompartment (BMC) dedicated to 1,2-propanediol (1,2-PD) degradation. PduS and PduO allow regeneration of the adenosylcobalamin cofactor within the BMC. Cobalamin reduction probably occurs spontaneously in the presence of free reduced flavin nucleotides, this protein may be involved in electron transfer for this reduction. Functionally, expression of a cosmid containing the full 21-gene pdu operon in E.coli allows E.coli to grow on 1,2-propanediol (1,2-PD) with the appearance of BMCs in its cytoplasm. Its function is as follows. The 1,2-PD-specific bacterial microcompartment (BMC) concentrates low levels of 1,2-PD catabolic enzymes, concentrates volatile reaction intermediates thus enhancing pathway flux and keeps the level of toxic, mutagenic propionaldehyde low. The chain is Cobalamin reductase PduS from Citrobacter freundii.